Here is a 160-residue protein sequence, read N- to C-terminus: 17.9 kDa class II heat shock protein (160 aa).

The sHSP domain maps to Asp-44–Ala-160.

This sequence belongs to the small heat shock protein (HSP20) family.

The protein resides in the cytoplasm. This chain is 17.9 kDa class II heat shock protein (HSP17.9), found in Helianthus annuus (Common sunflower).